Here is a 779-residue protein sequence, read N- to C-terminus: Phosphatidylinositol 4-phosphate 5-kinase 4 (779 aa).

The tract at residues 20–61 is disordered; it reads QQAKKRANSIFGTVSVAPQTDDDATTTTEENDDETSTNRSSI. Residues 39-54 are compositionally biased toward acidic residues; that stretch reads TDDDATTTTEENDDET. MORN repeat units follow at residues 77–99, 100–122, 123–145, 146–168, 169–191, 192–214, 215–237, and 238–259; these read YTGQ…DGCM, YIGD…SGAT, YEGE…SGDT, YKGQ…NGDV, YDGE…DGSY, YMGE…DGNR, YDGF…DGSF, and YVGH…SGDD. Residues 382-775 enclose the PIPK domain; that stretch reads TISKGHRNYE…RFRDFIFKVF (394 aa). Residues 735–756 are activation loop; it reads YDISKKLEHAYKSIQYDPTSIS.

The catalysed reaction is a 1,2-diacyl-sn-glycero-3-phospho-(1D-myo-inositol 4-phosphate) + ATP = a 1,2-diacyl-sn-glycero-3-phospho-(1D-myo-inositol-4,5-bisphosphate) + ADP + H(+). This chain is Phosphatidylinositol 4-phosphate 5-kinase 4 (PIP5K4), found in Arabidopsis thaliana (Mouse-ear cress).